The following is a 715-amino-acid chain: Zinc finger protein 544 (715 aa).

The KRAB domain occupies 14 to 85 (VCFEDVAMAF…EQEAPRDWKA (72 aa)). Residues K273 and K289 each participate in a glycyl lysine isopeptide (Lys-Gly) (interchain with G-Cter in SUMO2) cross-link. The C2H2-type 1; atypical zinc-finger motif lies at 354–374 (SVCNQCGKSFSCCKLIHQRTH). 12 C2H2-type zinc fingers span residues 380–402 (FECT…QRTH), 408–430 (YECD…QRIH), 436–458 (YQCI…QRIH), 464–486 (YECT…KRTH), 492–514 (FKCT…QRTH), 520–542 (YECN…QRIH), 548–570 (YQCI…QRIH), 576–598 (YDCT…KRTH), 604–626 (YECN…LQIH), 632–654 (YKCN…QRTH), 660–682 (FECS…HRIH), and 688–710 (YECS…RRTH). Residue K534 forms a Glycyl lysine isopeptide (Lys-Gly) (interchain with G-Cter in SUMO2) linkage.

This sequence belongs to the krueppel C2H2-type zinc-finger protein family.

It localises to the nucleus. May be involved in transcriptional regulation. The sequence is that of Zinc finger protein 544 (ZNF544) from Homo sapiens (Human).